The primary structure comprises 65 residues: Keratin-associated protein 23-1 (65 aa).

Interacts with hair keratins.

Its function is as follows. In the hair cortex, hair keratin intermediate filaments are embedded in an interfilamentous matrix, consisting of hair keratin-associated proteins (KRTAP), which are essential for the formation of a rigid and resistant hair shaft through their extensive disulfide bond cross-linking with abundant cysteine residues of hair keratins. The matrix proteins include the high-sulfur and high-glycine-tyrosine keratins. This is Keratin-associated protein 23-1 (KRTAP23-1) from Homo sapiens (Human).